The primary structure comprises 151 residues: Group 10 secretory phospholipase A2 (151 aa).

The signal sequence occupies residues 1–17 (MLLLLLLLLLGPGPGFS). Positions 18 to 28 (EATRRSHVYKR) are excised as a propeptide. Intrachain disulfides connect C39/C97, C53/C143, C55/C71, C70/C125, C76/C150, C77/C118, C86/C111, and C104/C116. Residues Y54, G56, and G58 each contribute to the Ca(2+) site. H74 is a catalytic residue. D75 contacts Ca(2+). Residue D119 is part of the active site.

It belongs to the phospholipase A2 family. As to quaternary structure, interacts with PLA2R1; this interaction mediates PLA2G10 clearance and inactivation. It depends on Ca(2+) as a cofactor. In terms of tissue distribution, expressed at high levels in testis and the gastrointestinal tract including stomach and colon. Expressed at lower levels in other tissues including small intestine, uterus, oviduct, lung, thymus, spleen and brain. Expressed in Paneth-like secretory epithelial cells of the colon. Expressed in gastric and ileac epithelial cells and in glandular epithelium of intestinal mucosa (at protein level). Expressed in late spermatogenic cells, spermatocytes and spermatids, but not spermatogonia in seminiferous tubules (at protein level). Expressed mainly in the apical side of endometrial epithelial cells and in the interstitium beneath the epithelium of uterus (at protein level). Expressed in resident spleen macrophages (at protein level). Expressed at outermost layer of hair follicles. Expressed in dorsal root ganglia in both NEFH-positive A-fibers and PRPH-positive C-fibers (at protein level).

The protein resides in the secreted. Its subcellular location is the lysosome. The protein localises to the cytoplasmic vesicle. It localises to the secretory vesicle. It is found in the acrosome. It catalyses the reaction a 1,2-diacyl-sn-glycero-3-phosphocholine + H2O = a 1-acyl-sn-glycero-3-phosphocholine + a fatty acid + H(+). It carries out the reaction 1-hexadecanoyl-2-(9Z-octadecenoyl)-sn-glycero-3-phosphocholine + H2O = 1-hexadecanoyl-sn-glycero-3-phosphocholine + (9Z)-octadecenoate + H(+). The catalysed reaction is 1-octadecanoyl-2-(5Z,8Z,11Z,14Z-eicosatetraenoyl)-sn-glycero-3-phosphocholine + H2O = 1-octadecanoyl-sn-glycero-3-phosphocholine + (5Z,8Z,11Z,14Z)-eicosatetraenoate + H(+). The enzyme catalyses 1,2-dihexadecanoyl-sn-glycero-3-phosphocholine + H2O = 1-hexadecanoyl-sn-glycero-3-phosphocholine + hexadecanoate + H(+). It catalyses the reaction 1-hexadecanoyl-2-(9Z-octadecenoyl)-sn-glycero-3-phosphoglycerol + H2O = 1-hexadecanoyl-sn-glycero-3-phosphoglycerol + (9Z)-octadecenoate + H(+). It carries out the reaction 1,2-dihexadecanoyl-sn-glycero-3-phospho-(1'-sn-glycerol) + H2O = 1-hexadecanoyl-sn-glycero-3-phospho-(1'-sn-glycerol) + hexadecanoate + H(+). The catalysed reaction is 1-hexadecanoyl-2-(9Z-octadecenoyl)-sn-glycero-3-phospho-L-serine + H2O = 1-hexadecanoyl-sn-glycero-3-phospho-L-serine + (9Z)-octadecenoate + H(+). The enzyme catalyses 1-hexadecanoyl-2-(9Z,12Z-octadecadienoyl)-sn-glycero-3-phosphoethanolamine + H2O = 1-hexadecanoyl-sn-glycero-3-phosphoethanolamine + (9Z,12Z)-octadecadienoate + H(+). It catalyses the reaction 1-hexadecanoyl-2-(9Z-octadecenoyl)-sn-glycero-3-phosphate + H2O = 1-hexadecanoyl-sn-glycero-3-phosphate + (9Z)-octadecenoate + H(+). It carries out the reaction 1-O-hexadecyl-2-acetyl-sn-glycero-3-phosphocholine + H2O = 1-O-hexadecyl-sn-glycero-3-phosphocholine + acetate + H(+). In terms of biological role, secretory calcium-dependent phospholipase A2 that primarily targets extracellular phospholipids. Hydrolyzes the ester bond of the fatty acyl group attached at sn-2 position of phospholipids with preference for phosphatidylcholines and phosphatidylglycerols over phosphatidylethanolamines. Preferentially releases sn-2 omega-6 and omega-3 polyunsaturated fatty acyl (PUFA) chains over saturated fatty acyls. Contributes to phospholipid remodeling of very low-density lipoprotein (VLDL), low-density lipoprotein (LDL) and high-density lipoprotein (HDL) particles. Hydrolyzes LDL phospholipids releasing unsaturated fatty acids that regulate macrophage differentiation toward foam cells. Efficiently hydrolyzes and inactivates PAF, a potent lipid mediator present in oxidized LDL. May act in an autocrine and paracrine manner. Secreted by lung epithelium, targets membrane phospholipids of infiltrating eosinophils, releasing arachidonate and boosting eicosanoid and cysteinyl leukotriene synthesis involved in airway inflammatory response. Secreted by gut epithelium, hydrolyzes dietary and biliary phosphatidylcholines in the gastrointestinal lumen, thereby regulating adipogenesis and body weight. Plays a stem cell regulator role in colon epithelium. Within intracellular compartment, mediates Paneth-like cell differentiation and its stem cell supporting functions by inhibiting Wnt signaling pathway in intestinal stem cell (ISC). Secreted in the intestinal lumen upon inflammation, acts in an autocrine way and promotes prostaglandin E2 synthesis that stimulates the Wnt signaling pathway in ISCs and tissue regeneration. May participate in hair follicle morphogenesis by regulating phosphatidylethanolamines metabolism at the outermost epithelial layer and facilitating melanin synthesis. By generating lysophosphatidylcholines (LPCs) at sperm acrosome controls sperm cell capacitation, acrosome reaction and overall fertility. May promote neurite outgrowth in neuron fibers involved in nociception. Contributes to lipid remodeling of cellular membranes and generation of lipid mediators involved in pathogen clearance. Cleaves sn-2 fatty acyl chains of phosphatidylglycerols and phosphatidylethanolamines, which are major components of membrane phospholipids in bacteria. Displays bactericidal activity against Gram-positive bacteria by directly hydrolyzing phospholipids of the bacterial membrane. In pulmonary epithelium, may contribute to host defense response against adenoviral infection. Prevents adenovirus entry into host cells by hydrolyzing host cell plasma membrane, releasing C16:0 LPCs that inhibit virus-mediated membrane fusion and viral infection. Likely prevents adenoviral entry into the endosomes of host cells. May play a role in maturation and activation of innate immune cells including macrophages, group 2 innate lymphoid cells and mast cells. The polypeptide is Group 10 secretory phospholipase A2 (Pla2g10) (Mus musculus (Mouse)).